Reading from the N-terminus, the 510-residue chain is Glycerol kinase (510 aa).

Thr13 lines the ADP pocket. The ATP site is built by Thr13 and Thr14. A sn-glycerol 3-phosphate-binding site is contributed by Thr13. ADP is bound at residue Arg17. Residues Arg83, Glu84, Tyr135, and Asp255 each contribute to the sn-glycerol 3-phosphate site. Glycerol contacts are provided by Arg83, Glu84, Tyr135, Asp255, and Gln256. ADP contacts are provided by Thr277, Gly321, Gly421, and Asn425. ATP contacts are provided by Thr277, Gly321, and Gly421.

It belongs to the FGGY kinase family.

It catalyses the reaction glycerol + ATP = sn-glycerol 3-phosphate + ADP + H(+). Its pathway is polyol metabolism; glycerol degradation via glycerol kinase pathway; sn-glycerol 3-phosphate from glycerol: step 1/1. Key enzyme in the regulation of glycerol uptake and metabolism. Catalyzes the phosphorylation of glycerol to yield sn-glycerol 3-phosphate. The protein is Glycerol kinase of Haloquadratum walsbyi (strain DSM 16790 / HBSQ001).